The following is a 1182-amino-acid chain: Protein patched homolog 2 (1182 aa).

The Cytoplasmic segment spans residues 1–57 (MVRPLSLGELPPSYTPPARSSAPHILAGSLQAPLWLRAYFQGLLFSLGCRIQKHCGK). A helical transmembrane segment spans residues 58–78 (VLFLGLVAFGALALGLRVAVI). Residues 79 to 394 (ETDLEQLWVE…DILRAFSEVS (316 aa)) lie on the Extracellular side of the membrane. N-linked (GlcNAc...) asparagine glycosylation is present at N370. In terms of domain architecture, SSD spans 394-552 (STTRVVGGYL…MLVFPAILSL (159 aa)). Residues 395–414 (TTRVVGGYLLMLAYACVTML) form a helical membrane-spanning segment. Topologically, residues 415–428 (RWDCAQSQGAVGLA) are cytoplasmic. Residues 429 to 449 (GVLLVALAVASGLGLCALLGI) form a helical membrane-spanning segment. Residues 450–457 (TFNAATTQ) lie on the Extracellular side of the membrane. Residues 458–478 (VLPFLALGIGVDDIFLLAHAF) traverse the membrane as a helical segment. Over 479–501 (TKAPPDTPLPERMGECLRSTGTS) the chain is Cytoplasmic. The chain crosses the membrane as a helical span at residues 502–522 (VALTSVNNMVAFFMAALVPIP). The Extracellular portion of the chain corresponds to 523–531 (ALRAFSLQA). The chain crosses the membrane as a helical span at residues 532–552 (AIVVGCNFAAVMLVFPAILSL). Over 553-686 (DLRRRHRQRL…APLLLQTRAK (134 aa)) the chain is Cytoplasmic. A helical transmembrane segment spans residues 687 to 707 (ALVLLFFGALLGLSLYGATLV). Residues 708–963 (QDGLALTDVV…WEQYLGLRRC (256 aa)) lie on the Extracellular side of the membrane. N-linked (GlcNAc...) asparagine glycosylation is present at N812. A helical transmembrane segment spans residues 964–984 (FLLAVCILLVCTFLVCALLLL). Residues 985-991 (SPWTAGL) are Cytoplasmic-facing. The helical transmembrane segment at 992-1012 (IVLVLAMMTVELFGIMGFLGI) threads the bilayer. Residue K1013 is a topological domain, extracellular. Residues 1014-1034 (LSAIPVVILVASIGIGVEFTV) form a helical membrane-spanning segment. The Cytoplasmic segment spans residues 1035–1064 (HVALGFLTSHGSRNLRAASALEQTFAPVTD). A helical membrane pass occupies residues 1065-1085 (GAVSTLLGLLMLAGSNFDFII). A topological domain (extracellular) is located at residue R1086. The chain crosses the membrane as a helical span at residues 1087 to 1107 (YFFVVLTVLTLLGLLHGLLLL). Residues 1108-1182 (PVLLSILGPP…YVHPASEEPT (75 aa)) lie on the Cytoplasmic side of the membrane.

Belongs to the patched family. As to expression, expressed in epithelial cells of the developing hair, tooth and whisker.

It localises to the membrane. In terms of biological role, plays a role in the control of cellular growth. May have a role in epidermal development. May act as a receptor for Sonic hedgehog (SHH). This chain is Protein patched homolog 2 (Ptch2), found in Mus musculus (Mouse).